The chain runs to 210 residues: Thiamine-phosphate synthase (210 aa).

4-amino-2-methyl-5-(diphosphooxymethyl)pyrimidine is bound by residues 39–43 (QLREK) and asparagine 71. Aspartate 72 and aspartate 91 together coordinate Mg(2+). Serine 110 lines the 4-amino-2-methyl-5-(diphosphooxymethyl)pyrimidine pocket. Position 134–136 (134–136 (TPT)) interacts with 2-[(2R,5Z)-2-carboxy-4-methylthiazol-5(2H)-ylidene]ethyl phosphate. Lysine 137 contacts 4-amino-2-methyl-5-(diphosphooxymethyl)pyrimidine. Glycine 163 provides a ligand contact to 2-[(2R,5Z)-2-carboxy-4-methylthiazol-5(2H)-ylidene]ethyl phosphate.

This sequence belongs to the thiamine-phosphate synthase family. It depends on Mg(2+) as a cofactor.

It catalyses the reaction 2-[(2R,5Z)-2-carboxy-4-methylthiazol-5(2H)-ylidene]ethyl phosphate + 4-amino-2-methyl-5-(diphosphooxymethyl)pyrimidine + 2 H(+) = thiamine phosphate + CO2 + diphosphate. The enzyme catalyses 2-(2-carboxy-4-methylthiazol-5-yl)ethyl phosphate + 4-amino-2-methyl-5-(diphosphooxymethyl)pyrimidine + 2 H(+) = thiamine phosphate + CO2 + diphosphate. It carries out the reaction 4-methyl-5-(2-phosphooxyethyl)-thiazole + 4-amino-2-methyl-5-(diphosphooxymethyl)pyrimidine + H(+) = thiamine phosphate + diphosphate. Its pathway is cofactor biosynthesis; thiamine diphosphate biosynthesis; thiamine phosphate from 4-amino-2-methyl-5-diphosphomethylpyrimidine and 4-methyl-5-(2-phosphoethyl)-thiazole: step 1/1. Condenses 4-methyl-5-(beta-hydroxyethyl)thiazole monophosphate (THZ-P) and 2-methyl-4-amino-5-hydroxymethyl pyrimidine pyrophosphate (HMP-PP) to form thiamine monophosphate (TMP). The chain is Thiamine-phosphate synthase from Campylobacter jejuni (strain RM1221).